A 113-amino-acid polypeptide reads, in one-letter code: Large ribosomal subunit protein bL19 (113 aa).

This sequence belongs to the bacterial ribosomal protein bL19 family.

Functionally, this protein is located at the 30S-50S ribosomal subunit interface and may play a role in the structure and function of the aminoacyl-tRNA binding site. This Desulfitobacterium hafniense (strain DSM 10664 / DCB-2) protein is Large ribosomal subunit protein bL19.